We begin with the raw amino-acid sequence, 557 residues long: Ubiquitin C-terminal hydrolase 22 (557 aa).

The UBP-type; degenerate zinc-finger motif lies at 36–130; it reads FRCFNDARIK…VSKQLFGLGM (95 aa). Residues C56, C59, C69, C72, C77, H80, H84, and H91 each coordinate Zn(2+). In terms of domain architecture, USP spans 177–531; sequence RGLNNLGSTC…ECYMLFYAQE (355 aa). C186 functions as the Nucleophile in the catalytic mechanism. The active-site Proton acceptor is the H491.

The protein belongs to the peptidase C19 family. In terms of assembly, component of a deubiquitination module (DUB module) formed by ENY2, SGF11, and UBP22 in Arabidopsis. Interacts directly with SGF11, but not with ENY2.

The protein localises to the nucleus. It localises to the nucleoplasm. It catalyses the reaction Thiol-dependent hydrolysis of ester, thioester, amide, peptide and isopeptide bonds formed by the C-terminal Gly of ubiquitin (a 76-residue protein attached to proteins as an intracellular targeting signal).. In terms of biological role, component of a deubiquitination module (DUB module) that specifically deubiquinates monoubiquinated histone H2B (H2Bub). Does not seem to be a component of the TREX-2 complex. Seems to act independently of the SAGA multiprotein complex. The DUB module is responsible for the major H2Bub deubiquitinase activity in Arabidopsis. In Arabidopsis thaliana (Mouse-ear cress), this protein is Ubiquitin C-terminal hydrolase 22.